A 300-amino-acid polypeptide reads, in one-letter code: Epimerase family protein SAB0724c (300 aa).

It belongs to the NAD(P)-dependent epimerase/dehydratase family. SDR39U1 subfamily.

The polypeptide is Epimerase family protein SAB0724c (Staphylococcus aureus (strain bovine RF122 / ET3-1)).